The primary structure comprises 218 residues: MPMTLGYWNIRGLAHSIRLLLEYTGSSYEEKKYTMGDAPDYDRSQWLNEKFKLGLDFPNLPYLIDGTHKITQSNAILRYIARKHNLCGETEKEKIREDILENQLMDNRMQLARLCYDPDFEKLKPEYLEGLPEMLKLYSQFLGKQPWFLGDKITFVDFIAYDVLERNQVFEPSCLDAFPNLKDFISRFEGLEKISAYMKSSRFLPRPVFTKMAVWGNK.

The GST N-terminal domain maps to 2–88 (PMTLGYWNIR…YIARKHNLCG (87 aa)). 7 to 8 (YW) contacts glutathione. 2 positions are modified to phosphoserine: Ser27 and Ser44. Residues 43 to 46 (RSQW), Lys50, 59 to 60 (NL), and 72 to 73 (QS) each bind glutathione. The GST C-terminal domain maps to 90-208 (TEKEKIREDI…KSSRFLPRPV (119 aa)). Residue Tyr116 participates in substrate binding.

Belongs to the GST superfamily. Mu family. As to quaternary structure, homodimer.

It localises to the cytoplasm. The enzyme catalyses RX + glutathione = an S-substituted glutathione + a halide anion + H(+). It carries out the reaction 11(S)-hydroxy-14(S),15(S)-epoxy-(5Z,8Z,12E)-eicosatrienoate + glutathione = (11S,15S)-dihydroxy-14(R)-S-glutathionyl-(5Z,8Z,12E)-eicosatrienoate. Conjugation of reduced glutathione to a wide number of exogenous and endogenous hydrophobic electrophiles. Participates in the formation of novel hepoxilin regioisomers. Has activity toward aflatoxin B(1)-8,9-epoxide (AFBO). The sequence is that of Glutathione S-transferase Mu 2 (GSTM2) from Macaca fascicularis (Crab-eating macaque).